The sequence spans 1696 residues: uncharacterized protein (1696 aa).

Disordered regions lie at residues 1 to 113, 151 to 194, 258 to 284, and 299 to 376; these read MDSS…HPQY, DSWT…SRSR, DVTRSSASREGARETRNEGRTLYPEKK, and GRRE…KQRG. Over residues 21-42 the composition is skewed to pro residues; it reads LHPPSAPLPPPPPLPPPPPPRQ. Residues 52 to 61 are compositionally biased toward polar residues; that stretch reads GRSTQSNGQR. Residues 96-113 show a composition bias toward low complexity; that stretch reads QQQHQPLSLQQQQQHPQY. Over residues 170 to 183 the composition is skewed to polar residues; sequence RNYQYDYSRNSSGV. Composition is skewed to basic and acidic residues over residues 267–284, 325–340, and 358–376; these read EGARETRNEGRTLYPEKK, ETPRSYKNSRENEWSR, and RGKEHLGHSDRGLVEKQRG. A Phosphoserine modification is found at S378. 7 disordered regions span residues 419–483, 688–724, 1063–1090, 1184–1211, 1319–1340, 1361–1429, and 1658–1696; these read RALL…GGKL, SDIGGIEDDNKRIDKNVDSLSPENDSSRGRPMGLDSP, IKHKEDNCTESVEVETHEEKAKLPGGTS, TSKSIEKIESSGGTSEHRTPETDIVAGS, GEAVSSDGQVSGTEIPGGSGVR, VVSV…SDAS, and SESRCNQSISLPDDALDTRSAANMVSERPSSSAFSDSGM. 2 stretches are compositionally biased toward basic and acidic residues: residues 421–436 and 695–704; these read LLSDKNEKVSVTERNG and DDNKRIDKNV. S708 is modified (phosphoserine). Residues 1184 to 1204 show a composition bias toward basic and acidic residues; that stretch reads TSKSIEKIESSGGTSEHRTPE. Residues 1361–1370 show a composition bias toward basic and acidic residues; sequence VVSVPHRDPQ. Composition is skewed to polar residues over residues 1389–1398, 1658–1667, and 1677–1696; these read NYSTQKSYPS, SESRCNQSIS, and SAANMVSERPSSSAFSDSGM.

This is an uncharacterized protein from Arabidopsis thaliana (Mouse-ear cress).